Reading from the N-terminus, the 513-residue chain is Cytochrome P450 monooxygenase CYP3 (513 aa).

The tract at residues 1 to 21 is disordered; the sequence is MLPRSLGHSTSELSPPFDGPN. Residue Cys451 participates in heme binding.

The protein belongs to the cytochrome P450 family. Heme serves as cofactor.

It participates in secondary metabolite biosynthesis. In terms of biological role, cytochrome P450 monooxygenase; part of the gene cluster that mediates the biosynthesis of a tyrosine-derived cytochalasan acting as a fungal signal recognized by resistant rice plants and leads to avirulence in Pi33 resistant rice cultivars. The first step in the pathway is catalyzed by the hybrid PKS-NRPS ACE1, assisted by the enoyl reductase RAP1, that are responsible for fusion of the tyrosine precursor and the polyketide backbone. The polyketide synthase module (PKS) of ACE1 is responsible for the synthesis of the polyketide backbone and the downstream nonribosomal peptide synthetase (NRPS) amidates the carboxyl end of the polyketide with the tyrosine precursor. Because ACE1 lacks a designated enoylreductase (ER) domain, the required activity is provided the enoyl reductase RAP1. Reduction by the hydrolyase ORFZ, followed by dehydration and intra-molecular Diels-Alder cyclization by the Diels-Alderase ORF3 then yield the required isoindolone-fused macrocycle. A number of oxidative steps catalyzed by the tailoring enzymes identified within the cluster, including cytochrome P450 monooxygenases CYP1 to CYP4, the FAD-linked oxidoreductase OXR2 and the short-chain dehydrogenase/reductase OXR1, are further required to afford the final cytochalasans that confer avirulence and which have still to be identified. The monooxygenase CYP1 has been shown to be a site-selective C-18 hydroxylase whereas the function of CYP3 is the site-selective epoxidation of the C-6/C-7 olefin that is present in some intermediate compounds. Finally, SYN2 and RAP2 are not required for avirulence in Pi33 resistant rice cultivars. The sequence is that of Cytochrome P450 monooxygenase CYP3 from Pyricularia oryzae (strain 70-15 / ATCC MYA-4617 / FGSC 8958) (Rice blast fungus).